The sequence spans 208 residues: Ribonuclease HII (208 aa).

Positions 1-205 (MIVVGIDEAG…LQEIAPNYYI (205 aa)) constitute an RNase H type-2 domain. A divalent metal cation is bound by residues aspartate 7, glutamate 8, and aspartate 104.

It belongs to the RNase HII family. Mn(2+) is required as a cofactor. Requires Mg(2+) as cofactor.

The protein localises to the cytoplasm. The enzyme catalyses Endonucleolytic cleavage to 5'-phosphomonoester.. Functionally, endonuclease that specifically degrades the RNA of RNA-DNA hybrids. The sequence is that of Ribonuclease HII from Sulfurisphaera tokodaii (strain DSM 16993 / JCM 10545 / NBRC 100140 / 7) (Sulfolobus tokodaii).